A 128-amino-acid chain; its full sequence is MSSNIPAELKYVASHEWLRLEEDGIITVGITHHAQELLGDIVFVELPEVGANLAAEEQAGVVESVKAASDVYAPIAGEVVAVNEDLPSAPETANSDPYGAGWFFKLKPANVADYDVLLTAEQYAGEVD.

The region spanning 25–107 (IITVGITHHA…YGAGWFFKLK (83 aa)) is the Lipoyl-binding domain. Residue Lys66 is modified to N6-lipoyllysine.

The protein belongs to the GcvH family. As to quaternary structure, the glycine cleavage system is composed of four proteins: P, T, L and H. (R)-lipoate serves as cofactor.

In terms of biological role, the glycine cleavage system catalyzes the degradation of glycine. The H protein shuttles the methylamine group of glycine from the P protein to the T protein. This chain is Glycine cleavage system H protein, found in Neisseria meningitidis serogroup A / serotype 4A (strain DSM 15465 / Z2491).